A 157-amino-acid chain; its full sequence is Transcription antitermination protein NusB (157 aa).

It belongs to the NusB family.

Its function is as follows. Involved in transcription antitermination. Required for transcription of ribosomal RNA (rRNA) genes. Binds specifically to the boxA antiterminator sequence of the ribosomal RNA (rrn) operons. The polypeptide is Transcription antitermination protein NusB (Xylella fastidiosa (strain 9a5c)).